The primary structure comprises 637 residues: Threonine--tRNA ligase (637 aa).

A TGS domain is found at 1 to 61 (MPNVKLPDGN…KEDCSLIIVT (61 aa)). Residues 242-533 (DHRKLGKALD…LIEHYAGKLP (292 aa)) form a catalytic region. 3 residues coordinate Zn(2+): Cys333, His384, and His510.

This sequence belongs to the class-II aminoacyl-tRNA synthetase family. As to quaternary structure, homodimer. The cofactor is Zn(2+).

The protein localises to the cytoplasm. It catalyses the reaction tRNA(Thr) + L-threonine + ATP = L-threonyl-tRNA(Thr) + AMP + diphosphate + H(+). Catalyzes the attachment of threonine to tRNA(Thr) in a two-step reaction: L-threonine is first activated by ATP to form Thr-AMP and then transferred to the acceptor end of tRNA(Thr). Also edits incorrectly charged L-seryl-tRNA(Thr). In Legionella pneumophila (strain Corby), this protein is Threonine--tRNA ligase.